The following is a 231-amino-acid chain: Acyl-protein thioesterase 2 (231 aa).

A lipid anchor (S-palmitoyl cysteine) is attached at cysteine 2. Position 82 is a phosphoserine (serine 82). Active-site charge relay system residues include serine 122, aspartate 176, and histidine 210.

It belongs to the AB hydrolase superfamily. AB hydrolase 2 family. As to expression, ubiquitous; detected at low levels.

It localises to the cytoplasm. It catalyses the reaction S-hexadecanoyl-L-cysteinyl-[protein] + H2O = L-cysteinyl-[protein] + hexadecanoate + H(+). The catalysed reaction is prostaglandin E2 1-glyceryl ester + H2O = prostaglandin E2 + glycerol + H(+). The enzyme catalyses 1-hexadecanoyl-sn-glycero-3-phosphocholine + H2O = sn-glycerol 3-phosphocholine + hexadecanoate + H(+). It carries out the reaction 1-octadecanoyl-sn-glycero-3-phosphocholine + H2O = octadecanoate + sn-glycerol 3-phosphocholine + H(+). It catalyses the reaction 1-hexadecanoyl-sn-glycero-3-phosphate + H2O = sn-glycerol 3-phosphate + hexadecanoate + H(+). The catalysed reaction is 1-hexadecanoyl-sn-glycero-3-phospho-L-serine + H2O = sn-glycero-3-phospho-L-serine + hexadecanoate + H(+). In terms of biological role, acts as an acyl-protein thioesterase hydrolyzing fatty acids from S-acylated cysteine residues in proteins such as trimeric G alpha proteins, GSDMD, GAP43, ZDHHC6 or HRAS. Deacylates GAP43. Mediates depalmitoylation of ZDHHC6. Has lysophospholipase activity. Hydrolyzes prostaglandin glycerol esters (PG-Gs). Hydrolyzes PG-Gs in the following order prostaglandin D2-glycerol ester (PGD2-G) &gt; prostaglandin E2 glycerol ester (PGE2-G) &gt; prostaglandin F2-alpha-glycerol ester (PGF2-alpha-G). Hydrolyzes 1-arachidonoylglycerol but not 2-arachidonoylglycerol or arachidonoylethanolamide. The chain is Acyl-protein thioesterase 2 (Lypla2) from Mus musculus (Mouse).